The primary structure comprises 147 residues: Myoglobin (147 aa).

Positions 2–141 constitute a Globin domain; it reads ADFDAVLKCW…IIADLEANYK (140 aa). His60 serves as a coordination point for nitrite. His60 contributes to the O2 binding site. His89 contributes to the heme b binding site.

It belongs to the globin family. In terms of assembly, monomeric.

The protein localises to the cytoplasm. It is found in the sarcoplasm. The enzyme catalyses Fe(III)-heme b-[protein] + nitric oxide + H2O = Fe(II)-heme b-[protein] + nitrite + 2 H(+). The catalysed reaction is H2O2 + AH2 = A + 2 H2O. Monomeric heme protein which primary function is to store oxygen and facilitate its diffusion within muscle tissues. Reversibly binds oxygen through a pentacoordinated heme iron and enables its timely and efficient release as needed during periods of heightened demand. Depending on the oxidative conditions of tissues and cells, and in addition to its ability to bind oxygen, it also has a nitrite reductase activity whereby it regulates the production of bioactive nitric oxide. Under stress conditions, like hypoxia and anoxia, it also protects cells against reactive oxygen species thanks to its pseudoperoxidase activity. The sequence is that of Myoglobin (mb) from Thunnus alalunga (Albacore).